The sequence spans 274 residues: MSDDAMKLVVVGAAGRMGQALIRLIHATEGLTLHAAVARPGSAFIGKDAGEIAGLGQIGIPVTDDPLSAFLHADGVIDFTTPATSVTFADLAAQARIVHVIGTTGCSAEDETRFKAAARHARIVKSGNMGLGINLLSVLVEQAARALPPADWDIEVLEMHHKHKVDAPSGTALLLGEAAAKGRGIDLGDHSVRVRDGYTGPRPAGSIGFATLRGGAVIGDHSVIFAGEGERLTLSHSAGDRSLFARGALQAALWARDKKPGLYSMLDVLGLSTR.

12-17 contributes to the NAD(+) binding site; that stretch reads GAAGRM. Arginine 39 lines the NADP(+) pocket. NAD(+) contacts are provided by residues 102–104 and 126–129; these read GTT and SGNM. Histidine 160 acts as the Proton donor/acceptor in catalysis. Histidine 161 is a (S)-2,3,4,5-tetrahydrodipicolinate binding site. The Proton donor role is filled by lysine 164. 170–171 is a binding site for (S)-2,3,4,5-tetrahydrodipicolinate; that stretch reads GT.

The protein belongs to the DapB family.

Its subcellular location is the cytoplasm. It carries out the reaction (S)-2,3,4,5-tetrahydrodipicolinate + NAD(+) + H2O = (2S,4S)-4-hydroxy-2,3,4,5-tetrahydrodipicolinate + NADH + H(+). The enzyme catalyses (S)-2,3,4,5-tetrahydrodipicolinate + NADP(+) + H2O = (2S,4S)-4-hydroxy-2,3,4,5-tetrahydrodipicolinate + NADPH + H(+). It participates in amino-acid biosynthesis; L-lysine biosynthesis via DAP pathway; (S)-tetrahydrodipicolinate from L-aspartate: step 4/4. Functionally, catalyzes the conversion of 4-hydroxy-tetrahydrodipicolinate (HTPA) to tetrahydrodipicolinate. The protein is 4-hydroxy-tetrahydrodipicolinate reductase of Rhizobium rhizogenes (strain K84 / ATCC BAA-868) (Agrobacterium radiobacter).